Here is a 425-residue protein sequence, read N- to C-terminus: MSKTNESLMQRRVAAVPRGVGQIHPIFVDTAKNSTVIDVEGRELIDFAGGIAVLNTGHLHPKVVAAVQEQLTKVSHTCFQVLAYEPYVELCEKINKLVPGDFDKKTLLVTTGSEAVENAVKIARAATGRAGVIAFTGGYHGRTMMTLGLTGKVVPYSAGMGLMPGGIFRALFPSELHGISVDDAIASVERIFKNDAEPRDIAAIILEPVQGEGGFLPAPKELMKRLRALCDQHGILLIADEVQTGAGRTGTFFAMEQMGVAPDLTTFAKSIAGGFPLAGVCGKAEYMDAIAPGGLGGTYAGSPIACAAALAVIEVFEEEKLLDRSKAVGERLTAGLREIQKKYPIIGDVRGLGSMIAVEVFEKGTHTPNAAAVGQVVAKAREKGLILLSCGTYGNVLRILVPLTAEDALLDKGLAIIEECFAEIA.

Residues 112 to 113 (GS), Tyr-139, and 240 to 243 (DEVQ) contribute to the pyridoxal 5'-phosphate site. Lys-269 bears the N6-(pyridoxal phosphate)lysine mark. Pyridoxal 5'-phosphate is bound at residue Thr-298.

It belongs to the class-III pyridoxal-phosphate-dependent aminotransferase family. Pyridoxal 5'-phosphate is required as a cofactor.

It catalyses the reaction 5-aminopentanoate + 2-oxoglutarate = 5-oxopentanoate + L-glutamate. Functionally, catalyzes the conversion of 5-aminovalerate to 5-oxopentanoate. The protein is 5-aminovalerate aminotransferase DavT (davT) of Pseudomonas putida (strain ATCC 47054 / DSM 6125 / CFBP 8728 / NCIMB 11950 / KT2440).